Reading from the N-terminus, the 383-residue chain is NADH-quinone oxidoreductase subunit D 1 (383 aa).

Belongs to the complex I 49 kDa subunit family. In terms of assembly, NDH-1 is composed of 14 different subunits. Subunits NuoB, C, D, E, F, and G constitute the peripheral sector of the complex.

Its subcellular location is the cell membrane. It catalyses the reaction a quinone + NADH + 5 H(+)(in) = a quinol + NAD(+) + 4 H(+)(out). In terms of biological role, NDH-1 shuttles electrons from NADH, via FMN and iron-sulfur (Fe-S) centers, to quinones in the respiratory chain. The immediate electron acceptor for the enzyme in this species is believed to be a menaquinone. Couples the redox reaction to proton translocation (for every two electrons transferred, four hydrogen ions are translocated across the cytoplasmic membrane), and thus conserves the redox energy in a proton gradient. The protein is NADH-quinone oxidoreductase subunit D 1 of Streptomyces coelicolor (strain ATCC BAA-471 / A3(2) / M145).